A 255-amino-acid chain; its full sequence is MSSNILAMVAMQLLLIRIVSSQNVTNEYLNHQCNNTQGTYTRGSTFEKNLNQVIRNISHLHLRYGYTYNSNVEAYEVSKDPNIVFVLLQCRGDSYGSKCHSCLHTAFSGLRERCRGNKGAIIWYDQCVLEISSVNTKGRIRYDSFFNMTNVKNVSSNAEQFKNKRKDLFHKLLLGATKDVSDSNDAYAVGETRIGRNKMYAMMQCALDLTTNGCYVCLEWIIGRYDSFYFDRRQGTRVLSRSCSLRYELYPFLRR.

The N-terminal stretch at 1–21 is a signal peptide; the sequence is MSSNILAMVAMQLLLIRIVSS. Gnk2-homologous domains follow at residues 28–136 and 142–252; these read YLNH…SVNT and YDSF…LYPF.

Belongs to the cysteine-rich repeat secretory protein family.

It is found in the secreted. In Arabidopsis thaliana (Mouse-ear cress), this protein is Putative cysteine-rich repeat secretory protein 13 (CRRSP13).